We begin with the raw amino-acid sequence, 279 residues long: MSSRYTSSYTPSSRYGSGWDYSSSYSSSRTSRDRDTGSYRDRDYSSTSYTSTRPRYSTYASKYSTDLGKSTDKGMDDYSAAPIAKDEIEELSYDAKTPTTPTEETVDAPREVLQESQISDFVEEDDDQQTEVEEVKLTLASEPEESEEEEDDEDVRKAQELLAASTQIRESSPVSSPVKEVSSAASLFANDNGNETENRTPSPTVLNAKKLGGIPWPPKSSDVKKEGGDAEALPKKRVSDLIARFNTGVVEESKKTDDAYKNEYGAGTNVGKVSTHNFA.

Over residues 1-29 (MSSRYTSSYTPSSRYGSGWDYSSSYSSSR) the composition is skewed to low complexity. Disordered regions lie at residues 1-111 (MSSR…APRE) and 137-233 (LTLA…AEAL). Residues 30 to 44 (TSRDRDTGSYRDRDY) are compositionally biased toward basic and acidic residues. Low complexity predominate over residues 45–59 (SSTSYTSTRPRYSTY). The span at 142-153 (EPEESEEEEDDE) shows a compositional bias: acidic residues. A compositionally biased stretch (low complexity) spans 170 to 186 (ESSPVSSPVKEVSSAAS). A compositionally biased stretch (polar residues) spans 189–205 (ANDNGNETENRTPSPTV). Positions 221–233 (SDVKKEGGDAEAL) are enriched in basic and acidic residues.

This is an uncharacterized protein from Caenorhabditis elegans.